The primary structure comprises 129 residues: Large ribosomal subunit protein bL19 (129 aa).

Belongs to the bacterial ribosomal protein bL19 family.

In terms of biological role, this protein is located at the 30S-50S ribosomal subunit interface and may play a role in the structure and function of the aminoacyl-tRNA binding site. The chain is Large ribosomal subunit protein bL19 from Granulibacter bethesdensis (strain ATCC BAA-1260 / CGDNIH1).